Consider the following 79-residue polypeptide: Putative defensin-like protein 203 (79 aa).

An N-terminal signal peptide occupies residues 1-27 (MAKLIVNFSALLMIILLVSNGLPKAVA). Disulfide bonds link Cys-30–Cys-79, Cys-40–Cys-64, Cys-49–Cys-73, and Cys-53–Cys-75.

It belongs to the DEFL family.

It is found in the secreted. The chain is Putative defensin-like protein 203 from Arabidopsis thaliana (Mouse-ear cress).